A 292-amino-acid polypeptide reads, in one-letter code: Phosphoribosylaminoimidazole-succinocarboxamide synthase (292 aa).

This sequence belongs to the SAICAR synthetase family.

The catalysed reaction is 5-amino-1-(5-phospho-D-ribosyl)imidazole-4-carboxylate + L-aspartate + ATP = (2S)-2-[5-amino-1-(5-phospho-beta-D-ribosyl)imidazole-4-carboxamido]succinate + ADP + phosphate + 2 H(+). It functions in the pathway purine metabolism; IMP biosynthesis via de novo pathway; 5-amino-1-(5-phospho-D-ribosyl)imidazole-4-carboxamide from 5-amino-1-(5-phospho-D-ribosyl)imidazole-4-carboxylate: step 1/2. The sequence is that of Phosphoribosylaminoimidazole-succinocarboxamide synthase from Elusimicrobium minutum (strain Pei191).